The primary structure comprises 100 residues: NADH-quinone oxidoreductase subunit K (100 aa).

Helical transmembrane passes span 2 to 22 (IGLT…LVGI), 29 to 49 (IMLF…LAAI), and 60 to 80 (IIAF…LGLL).

The protein belongs to the complex I subunit 4L family. NDH-1 is composed of 14 different subunits. Subunits NuoA, H, J, K, L, M, N constitute the membrane sector of the complex.

The protein resides in the cell inner membrane. It carries out the reaction a quinone + NADH + 5 H(+)(in) = a quinol + NAD(+) + 4 H(+)(out). In terms of biological role, NDH-1 shuttles electrons from NADH, via FMN and iron-sulfur (Fe-S) centers, to quinones in the respiratory chain. The immediate electron acceptor for the enzyme in this species is believed to be ubiquinone. Couples the redox reaction to proton translocation (for every two electrons transferred, four hydrogen ions are translocated across the cytoplasmic membrane), and thus conserves the redox energy in a proton gradient. In Campylobacter concisus (strain 13826), this protein is NADH-quinone oxidoreductase subunit K.